The following is a 269-amino-acid chain: 3-methyl-2-oxobutanoate hydroxymethyltransferase (269 aa).

Residues Asp-52 and Asp-91 each coordinate Mg(2+). 3-methyl-2-oxobutanoate is bound by residues 52 to 53 (DT), Asp-91, and Lys-121. Glu-123 provides a ligand contact to Mg(2+). Residue Glu-186 is the Proton acceptor of the active site.

Belongs to the PanB family. In terms of assembly, homodecamer; pentamer of dimers. It depends on Mg(2+) as a cofactor.

Its subcellular location is the cytoplasm. It carries out the reaction 3-methyl-2-oxobutanoate + (6R)-5,10-methylene-5,6,7,8-tetrahydrofolate + H2O = 2-dehydropantoate + (6S)-5,6,7,8-tetrahydrofolate. It participates in cofactor biosynthesis; (R)-pantothenate biosynthesis; (R)-pantoate from 3-methyl-2-oxobutanoate: step 1/2. Catalyzes the reversible reaction in which hydroxymethyl group from 5,10-methylenetetrahydrofolate is transferred onto alpha-ketoisovalerate to form ketopantoate. The sequence is that of 3-methyl-2-oxobutanoate hydroxymethyltransferase from Rhodopirellula baltica (strain DSM 10527 / NCIMB 13988 / SH1).